Consider the following 430-residue polypeptide: Adenylosuccinate synthetase (430 aa).

GTP contacts are provided by residues 12–18 and 40–42; these read GDEGKGK and GHT. Catalysis depends on Asp13, which acts as the Proton acceptor. Mg(2+)-binding residues include Asp13 and Gly40. IMP-binding positions include 13–16, 38–41, Thr130, Arg144, Gln224, Thr239, and Arg303; these read DEGK and NAGH. The active-site Proton donor is the His41. Residue 299 to 305 coordinates substrate; sequence TVTGRKR. Residues Arg305, 331–333, and 413–415 contribute to the GTP site; these read KLD and STS.

It belongs to the adenylosuccinate synthetase family. Homodimer. Requires Mg(2+) as cofactor.

The protein resides in the cytoplasm. The catalysed reaction is IMP + L-aspartate + GTP = N(6)-(1,2-dicarboxyethyl)-AMP + GDP + phosphate + 2 H(+). The protein operates within purine metabolism; AMP biosynthesis via de novo pathway; AMP from IMP: step 1/2. Functionally, plays an important role in the de novo pathway of purine nucleotide biosynthesis. Catalyzes the first committed step in the biosynthesis of AMP from IMP. This chain is Adenylosuccinate synthetase, found in Parvibaculum lavamentivorans (strain DS-1 / DSM 13023 / NCIMB 13966).